Reading from the N-terminus, the 390-residue chain is Guanine nucleotide-binding protein alpha-7 subunit (390 aa).

Composition is skewed to low complexity over residues 1–12 and 22–42; these read MSSTTTNTTTAT and SSSP…MSPS. The tract at residues 1–42 is disordered; the sequence is MSSTTTNTTTATPAIQVNGNQSSSPQSPSSSTSTLSPPMSPS. The region spanning 70–390 is the G-alpha domain; that stretch reads SELKLLLLGT…TRQTMEEGGI (321 aa). The G1 motif stretch occupies residues 73–86; it reads KLLLLGTGDSGKST. Residues 78–85, 213–219, 238–242, 307–310, and alanine 363 each bind GTP; these read GTGDSGKS, LYTRVAS, DVAGQ, and NKRD. Serine 85 contributes to the Mg(2+) binding site. The tract at residues 211–219 is G2 motif; the sequence is DILYTRVAS. Residues 234 to 243 are G3 motif; it reads FRMIDVAGQR. Residues 303-310 form a G4 motif region; the sequence is ILFLNKRD. The G5 motif stretch occupies residues 361–366; sequence TTATDT.

It belongs to the G-alpha family. G proteins are composed of 3 units; alpha, beta and gamma. The alpha chain contains the guanine nucleotide binding site.

Its function is as follows. Guanine nucleotide-binding proteins (G proteins) are involved as modulators or transducers in various transmembrane signaling systems. This is Guanine nucleotide-binding protein alpha-7 subunit (gpaG) from Dictyostelium discoideum (Social amoeba).